Reading from the N-terminus, the 742-residue chain is Dynein axonemal intermediate chain 4 (742 aa).

WD repeat units lie at residues 462–502 (HCEC…DFPV), 511–559 (KHTS…DCND), 631–671 (GHKG…PILT), and 674–713 (NTTN…IDPV).

As to quaternary structure, part of the multisubunit axonemal dynein complex formed at least of two heavy chains and a number of intermediate and light chains. Associated with axonemal dynein subunits such as, DNAH2, DNAI3, and DYNLT1.

The protein resides in the cytoplasm. Its subcellular location is the cytoskeleton. It is found in the flagellum axoneme. It localises to the cilium axoneme. The protein localises to the dynein axonemal particle. In terms of biological role, plays a critical role in the assembly of axonemal dynein complex, thereby playing a role in ciliary motility. This chain is Dynein axonemal intermediate chain 4, found in Xenopus laevis (African clawed frog).